The primary structure comprises 224 residues: 7-cyano-7-deazaguanine synthase (224 aa).

Residue 8–18 (LSGGMDSAAVI) participates in ATP binding. Zn(2+) contacts are provided by cysteine 186, cysteine 196, cysteine 199, and cysteine 202.

It belongs to the QueC family. Requires Zn(2+) as cofactor.

The catalysed reaction is 7-carboxy-7-deazaguanine + NH4(+) + ATP = 7-cyano-7-deazaguanine + ADP + phosphate + H2O + H(+). It functions in the pathway purine metabolism; 7-cyano-7-deazaguanine biosynthesis. Its function is as follows. Catalyzes the ATP-dependent conversion of 7-carboxy-7-deazaguanine (CDG) to 7-cyano-7-deazaguanine (preQ(0)). The polypeptide is 7-cyano-7-deazaguanine synthase (Xanthomonas axonopodis pv. citri (strain 306)).